We begin with the raw amino-acid sequence, 193 residues long: Ribosomal RNA small subunit methyltransferase G (193 aa).

S-adenosyl-L-methionine-binding positions include Gly-64, Leu-69, 113 to 114 (IE), and Arg-126.

The protein belongs to the methyltransferase superfamily. RNA methyltransferase RsmG family.

Its subcellular location is the cytoplasm. It carries out the reaction guanosine(527) in 16S rRNA + S-adenosyl-L-methionine = N(7)-methylguanosine(527) in 16S rRNA + S-adenosyl-L-homocysteine. Specifically methylates the N7 position of guanine in position 527 of 16S rRNA. This Rickettsia massiliae (strain Mtu5) protein is Ribosomal RNA small subunit methyltransferase G.